Consider the following 293-residue polypeptide: tRNA pseudouridine synthase B (293 aa).

Aspartate 39 (nucleophile) is an active-site residue.

The protein belongs to the pseudouridine synthase TruB family. Type 1 subfamily.

The enzyme catalyses uridine(55) in tRNA = pseudouridine(55) in tRNA. In terms of biological role, responsible for synthesis of pseudouridine from uracil-55 in the psi GC loop of transfer RNAs. The sequence is that of tRNA pseudouridine synthase B from Streptococcus mutans serotype c (strain ATCC 700610 / UA159).